We begin with the raw amino-acid sequence, 221 residues long: Germin-like protein subfamily 1 member 19 (221 aa).

A signal peptide spans 1–21; it reads MKVSMSLILITLSALVTIAKA. Cysteine 31 and cysteine 48 are disulfide-bonded. The Cupin type-1 domain occupies 76 to 213; the sequence is SNVTTVNVDQ…AFQLDVNVVK (138 aa). Asparagine 77 carries an N-linked (GlcNAc...) asparagine glycan. Positions 110, 112, 117, and 159 each coordinate Mn(2+).

This sequence belongs to the germin family. As to quaternary structure, oligomer (believed to be a pentamer but probably hexamer).

The protein resides in the secreted. It is found in the extracellular space. The protein localises to the apoplast. Its function is as follows. May play a role in plant defense. Probably has no oxalate oxidase activity even if the active site is conserved. The chain is Germin-like protein subfamily 1 member 19 from Arabidopsis thaliana (Mouse-ear cress).